We begin with the raw amino-acid sequence, 69 residues long: Antimicrobial peptide ISAMP (69 aa).

Residues 1-23 form the signal peptide; the sequence is MRAVAIFIVTLLVLECVYFVMSE.

In terms of tissue distribution, expressed in the fat body, hemocytes and salivary glands of partially-fed female ticks. Not expressed in the midgut.

Its subcellular location is the secreted. Its function is as follows. Has antimicrobial activity against B.cereus (MIC=5.8 ug/ml), B.subtilis (MIC=12.3 ug/ml), S.aureus (MIC=10.4 ug/ml), E.coli Edl 933 (MIC=3.2 ug/ml) and E.coli MG/655 (MIC=4.2 ug/ml). Non-hemolytic. The protein is Antimicrobial peptide ISAMP of Ixodes scapularis (Black-legged tick).